Consider the following 129-residue polypeptide: Glycerol-3-phosphate cytidylyltransferase (129 aa).

CTP-binding positions include 9-10 (TF) and 14-17 (HYGH). Substrate is bound at residue Lys-44. Residue Lys-46 participates in CTP binding. Lys-77 provides a ligand contact to substrate. Position 113 to 120 (113 to 120 (RTDGISTT)) interacts with CTP.

It belongs to the cytidylyltransferase family. Homodimer.

The protein localises to the cytoplasm. It carries out the reaction sn-glycerol 3-phosphate + CTP + H(+) = CDP-glycerol + diphosphate. The protein operates within cell wall biogenesis; poly(ribitol phosphate) teichoic acid biosynthesis. Its function is as follows. Catalyzes the transfer of the cytidylyl group of CTP to sn-glycerol 3-phosphate so the activated glycerol 3-phosphate can be used for teichoic acid synthesis, via incorporation into both the linkage unit by TarB and TarF. This Bacillus spizizenii (strain ATCC 23059 / NRRL B-14472 / W23) (Bacillus subtilis subsp. spizizenii) protein is Glycerol-3-phosphate cytidylyltransferase (tarD).